The following is a 708-amino-acid chain: RUN and FYVE domain-containing protein 1 (708 aa).

The span at 1 to 17 (MADREGGCAAGRGRELE) shows a compositional bias: basic and acidic residues. The disordered stretch occupies residues 1–57 (MADREGGCAAGRGRELEPELEPGPGPGSALEPGEEFEIVDRSQLPGPGDLRSATRPR). The RUN domain occupies 139–271 (DADHAPLQQF…LDANLCLKGE (133 aa)). Residues 321–374 (TVGDLQTKIDGLEKTNSKLQEELSAATDRICSLQEEQQQLREQNELIRERSEKS) adopt a coiled-coil conformation. Phosphotyrosine occurs at positions 389 and 400. The stretch at 405-617 (KQLKEEKKVR…QALQEMGLHL (213 aa)) forms a coiled coil. A disordered region spans residues 493-522 (QVMSSMKQMEERLQHSERARQGAEERSHKL). Residues 500–522 (QMEERLQHSERARQGAEERSHKL) are compositionally biased toward basic and acidic residues. The tract at residues 615–625 (LHLSQSKLKME) is interaction with RAB4. S620 carries the phosphoserine modification. Residues 642 to 700 (DDEATHCRQCEKEFSISRRKHHCRNCGHIFCNTCSSNELALPSYPKPVRVCDSCHTLLL) form an FYVE-type zinc finger. Zn(2+)-binding residues include C648, C651, C664, C667, C672, C675, C692, and C695.

Self-assembles through coiled coil domains to drive ELVA (endo-lysosomal vesicular assembly) formation. Interacts with BMX. May interact with SSB. Interacts with RAB4 and RAB5 that have been activated by GTP-binding. Interacts WITH RAB14 and RAB4B (GTP-bound form); the interactions allow endosomal tethering and fusion. Interacts with ARL8B (GTP-bound form); the interaction is required for RUFY1 endosomal location and promotes interaction with RAB14. Post-translationally, phosphorylation on Tyr-389 and/or Tyr-400 is required for interaction with BMX and endosomal targeting. As to expression, broadly expressed, with highest levels in lung, testis, kidney and brain.

Its subcellular location is the early endosome membrane. Its function is as follows. Activating adapter involved in cargo sorting from early/recycling endosomes. Regulates retrieval of proteins from endosomes to the trans-Golgi network through interaction with the dynein-dynactin complex. Dual effector of RAB4B and RAB14, mediates a cooperative interaction allowing endosomal tethering and fusion. Binds phospholipid vesicles containing phosphatidylinositol 3-phosphate and participates in early endosomal trafficking. In oocytes, self-assembles to form a protein matrix which hold together endolysosomes, autophagosomes and proteasomes and generate non-membrane-bound compartments called endo-lysosomal vesicular assemblies (ELVAs). In immature oocytes, ELVAs sequester ubiquitinated protein aggregates and degrade them upon oocyte maturation. The chain is RUN and FYVE domain-containing protein 1 from Homo sapiens (Human).